Consider the following 687-residue polypeptide: MEQGYGGYGAWSAGPANTQGTYGSGMTSWQGYENYNYYNAQNTSVPAGTPYSYGPASWEATKTNDGGLAAGSPAMHVASFAPEPCTDNSDSLIAKINQRLDMLSKEGGRGGISSGGEGVQDRDSSFRFQPYESYDARPCIPEHNPYRPGYGYDYDFDLGTDRNGSFGGTFNDCRDPAPERGSLDGFLRGRGQGRFQDRSNSSTFIRSDPFMPPSASEPLSTTWNELNYMGGRGLGGPSTSRPPPSLFSQSMAPDYSMMGMQGVGGFGGTMPYGCGRSQTRIRDWPRRRGFERFGPDNMGRKRKQFPLYEEPDAKLARADSDGDLSENDDGAGDLRSGDEEFRGEDDLCDSRKQRGEKEDEDEDVKKRREKQRRRDRMRDRAADRIQFACSVCKFRSFEDEEIQKHLQSKFHKETLRFISTKLPDKTVEFLQEYIINRNKKIEKRRQELLEKESPKPKPDPFKGIGQEHFFKKIEAAHCLACDMLIPAQHQLLQRHLHSVDHNHNRRLAAEQFKKTSLHVAKSVLNNKHIVKMLEKYLKGEDPFVNETADLETEGDENVGEEKEETPEEVAAEVLAEVITAAVKAVEGEGEPAAAHSDVLTEVEGPVDTAEASSDPHTEKLLEEQTCEAASETRSIEDKTRGEAAEARNEAAMPTADAGSTLPVIAIPGIMEDELEQTGAEAKDIPTE.

The interaction with MCM2 stretch occupies residues 1-195 (MEQGYGGYGA…FLRGRGQGRF (195 aa)). The interval 1–210 (MEQGYGGYGA…SSTFIRSDPF (210 aa)) is interaction with DPY30. Residue S72 is modified to Phosphoserine. 2 disordered regions span residues 105-124 (KEGG…DRDS) and 185-218 (GFLR…ASEP). R109 carries the asymmetric dimethylarginine; alternate modification. An Omega-N-methylarginine; alternate modification is found at R109. Positions 109-118 (RGGISSGGEG) are enriched in gly residues. An interaction with DDX5 region spans residues 109 to 201 (RGGISSGGEG…QGRFQDRSNS (93 aa)). Phosphoserine is present on S199. R232 and R276 each carry omega-N-methylarginine. The disordered stretch occupies residues 277–379 (SQTRIRDWPR…KQRRRDRMRD (103 aa)). 2 stretches are compositionally biased toward basic and acidic residues: residues 280-294 (RIRD…ERFG) and 311-320 (PDAKLARADS). The Bipartite nuclear localization signal motif lies at 286 to 303 (RRRGFERFGPDNMGRKRK). A Glycyl lysine isopeptide (Lys-Gly) (interchain with G-Cter in SUMO2) cross-link involves residue K314. Phosphoserine is present on residues S320, S325, and S336. Over residues 321 to 331 (DGDLSENDDGA) the composition is skewed to acidic residues. The span at 335–357 (RSGDEEFRGEDDLCDSRKQRGEK) shows a compositional bias: basic and acidic residues. An involved in chromatin-binding region spans residues 384–447 (RIQFACSVCK…NKKIEKRRQE (64 aa)). 2 consecutive C2H2 AKAP95-type zinc fingers follow at residues 389–411 (CSVC…SKFH) and 478–501 (CLAC…SVDH). An involved in condensin complex recruitment region spans residues 522 to 565 (SVLNNKHIVKMLEKYLKGEDPFVNETADLETEGDENVGEEKEET). Residue T552 is modified to Phosphothreonine. An RII-binding region spans residues 568–585 (EVAAEVLAEVITAAVKAV). The segment at 572 to 589 (EVLAEVITAAVKAVEGEG) is required for interaction with MYCBP. The interval 624–659 (QTCEAASETRSIEDKTRGEAAEARNEAAMPTADAGS) is disordered. The span at 633–648 (RSIEDKTRGEAAEARN) shows a compositional bias: basic and acidic residues. Phosphoserine is present on S659.

This sequence belongs to the AKAP95 family. Binds to the PKA RII-alpha regulatory subunit PRKAR2A. Interacts (via C-terminus) with FIGN. Interacts with NCAPD2, CCND3, CCNE1, MCM2, RPS6KA1, DDX5, PDE4A. Interacts with MYCBP; MYCBP is translocated to the nucleus and the interaction prevents the association of the PKA catalytic subunit leading to suppression of PKA activity. Interacts with CCND1, CASP3. Interacts with NFKB1; detetcted in the cytoplasm. Interacts with DPY30; mediating AKAP8 association with at least the MLL4/WBP7 HMT complex. Interacts with HDAC3; increased during mitosis. Interacts with GJA1; in the nucleus and in the nuclear membrane; the nuclear association increases with progress of cell cycle G1, S and G2 phase and decreases in M phase. Phosphorylated on tyrosine residues probably by SRC subfamily protein kinases; multiple phosphorylation is leading to dissociation from nuclear structures implicated in chromatin structural changes.

The protein resides in the nucleus matrix. It is found in the nucleus. Its subcellular location is the nucleolus. It localises to the cytoplasm. Its function is as follows. Anchoring protein that mediates the subcellular compartmentation of cAMP-dependent protein kinase (PKA type II). Acts as an anchor for a PKA-signaling complex onto mitotic chromosomes, which is required for maintenance of chromosomes in a condensed form throughout mitosis. Recruits condensin complex subunit NCAPD2 to chromosomes required for chromatin condensation; the function appears to be independent from PKA-anchoring. Specifically involved in recruitment of CAPD2 to, and condensation of maternal but not paternal chromosomes. May help to deliver cyclin D/E to CDK4 to facilitate cell cycle progression. Required for cell cycle G2/M transition and histone deacetylation during mitosis. In mitotic cells recruits HDAC3 to the vicinity of chromatin leading to deacetylation and subsequent phosphorylation at 'Ser-10' of histone H3; in this function may act redundantly with AKAP8L. Involved in nuclear retention of RPS6KA1 upon ERK activation thus inducing cell proliferation. May be involved in regulation of DNA replication by acting as scaffold for MCM2. Enhances HMT activity of the KMT2 family MLL4/WBP7 complex and is involved in transcriptional regulation. In a teratocarcinoma cell line is involved in retinoic acid-mediated induction of developmental genes implicating H3 'Lys-4' methylation. May be involved in recruitment of active CASP3 to the nucleus in apoptotic cells. May act as a carrier protein of GJA1 for its transport to the nucleus. May play a repressive role in the regulation of rDNA transcription. Preferentially binds GC-rich DNA in vitro. In cells, associates with ribosomal RNA (rRNA) chromatin, preferentially with rRNA promoter and transcribed regions. Involved in modulation of Toll-like receptor signaling. Required for the cAMP-dependent suppression of TNF-alpha in early stages of LPS-induced macrophage activation; the function probably implicates targeting of PKA to NFKB1. In Mus musculus (Mouse), this protein is A-kinase anchor protein 8 (Akap8).